A 132-amino-acid polypeptide reads, in one-letter code: Phosphoribosyl-AMP cyclohydrolase (132 aa).

D86 contacts Mg(2+). C87 serves as a coordination point for Zn(2+). 2 residues coordinate Mg(2+): D88 and D90. Residues C103 and C110 each coordinate Zn(2+).

Belongs to the PRA-CH family. Homodimer. The cofactor is Mg(2+). Requires Zn(2+) as cofactor.

It localises to the cytoplasm. It carries out the reaction 1-(5-phospho-beta-D-ribosyl)-5'-AMP + H2O = 1-(5-phospho-beta-D-ribosyl)-5-[(5-phospho-beta-D-ribosylamino)methylideneamino]imidazole-4-carboxamide. It functions in the pathway amino-acid biosynthesis; L-histidine biosynthesis; L-histidine from 5-phospho-alpha-D-ribose 1-diphosphate: step 3/9. Its function is as follows. Catalyzes the hydrolysis of the adenine ring of phosphoribosyl-AMP. This is Phosphoribosyl-AMP cyclohydrolase from Haloquadratum walsbyi (strain DSM 16790 / HBSQ001).